The chain runs to 186 residues: Elongation factor P (186 aa).

Belongs to the elongation factor P family.

It localises to the cytoplasm. The protein operates within protein biosynthesis; polypeptide chain elongation. Involved in peptide bond synthesis. Stimulates efficient translation and peptide-bond synthesis on native or reconstituted 70S ribosomes in vitro. Probably functions indirectly by altering the affinity of the ribosome for aminoacyl-tRNA, thus increasing their reactivity as acceptors for peptidyl transferase. In Neisseria meningitidis serogroup A / serotype 4A (strain DSM 15465 / Z2491), this protein is Elongation factor P.